Reading from the N-terminus, the 471-residue chain is ATP synthase subunit beta (471 aa).

Residue 158 to 165 (GGAGCGKT) participates in ATP binding.

This sequence belongs to the ATPase alpha/beta chains family. In terms of assembly, F-type ATPases have 2 components, CF(1) - the catalytic core - and CF(0) - the membrane proton channel. CF(1) has five subunits: alpha(3), beta(3), gamma(1), delta(1), epsilon(1). CF(0) has three main subunits: a(1), b(2) and c(9-12). The alpha and beta chains form an alternating ring which encloses part of the gamma chain. CF(1) is attached to CF(0) by a central stalk formed by the gamma and epsilon chains, while a peripheral stalk is formed by the delta and b chains.

The protein localises to the cell inner membrane. It carries out the reaction ATP + H2O + 4 H(+)(in) = ADP + phosphate + 5 H(+)(out). Its function is as follows. Produces ATP from ADP in the presence of a proton gradient across the membrane. The catalytic sites are hosted primarily by the beta subunits. This chain is ATP synthase subunit beta, found in Desulfotalea psychrophila (strain LSv54 / DSM 12343).